Reading from the N-terminus, the 55-residue chain is Small polypeptide DEVIL 10 (55 aa).

The N-linked (GlcNAc...) asparagine glycan is linked to Asn-7. The interval 19 to 50 (RFGDRCLLMAKQQRTRLYILRRCVSMLLCWHD) is required for DVL/RTFL small polypeptide activity. The helical transmembrane segment at 32-48 (RTRLYILRRCVSMLLCW) threads the bilayer.

The protein belongs to the DVL/RTFL small polypeptides family.

It is found in the cell membrane. Its function is as follows. Small polypeptide acting as a regulatory molecule which coordinates cellular responses required for differentiation, growth and development, probably by restricting polar cell proliferation in lateral organs and coordinating socket cell recruitment and differentiation at trichome sites. The protein is Small polypeptide DEVIL 10 of Arabidopsis thaliana (Mouse-ear cress).